We begin with the raw amino-acid sequence, 708 residues long: Exocyst complex component 5 (708 aa).

The residue at position 2 (Ala2) is an N-acetylalanine. The stretch at 40 to 101 (KRLLEEFVNH…AFQHFQELDE (62 aa)) forms a coiled coil. 3 positions are modified to phosphothreonine: Thr122, Thr395, and Thr405. At Ser412 the chain carries Phosphoserine.

Belongs to the SEC10 family. In terms of assembly, the exocyst complex is composed of EXOC1, EXOC2, EXOC3, EXOC4, EXOC5, EXOC6, EXOC7 and EXOC8. Interacts with EXOC3L1. In terms of tissue distribution, ubiquitous.

The protein localises to the cytoplasm. Its subcellular location is the midbody. Component of the exocyst complex involved in the docking of exocytic vesicles with fusion sites on the plasma membrane. In Homo sapiens (Human), this protein is Exocyst complex component 5 (EXOC5).